The primary structure comprises 137 residues: Large ribosomal subunit protein uL16 (137 aa).

It belongs to the universal ribosomal protein uL16 family. In terms of assembly, part of the 50S ribosomal subunit.

Functionally, binds 23S rRNA and is also seen to make contacts with the A and possibly P site tRNAs. This chain is Large ribosomal subunit protein uL16, found in Acinetobacter baumannii (strain AB307-0294).